A 117-amino-acid chain; its full sequence is Immunoglobulin heavy variable 3-30-3 (117 aa).

Positions 1 to 19 (MEFGLSWVFLVALLRGVQC) are cleaved as a signal peptide. Q20 is subject to Pyrrolidone carboxylic acid. Residues 20 to 44 (QVQLVESGGGVVQPGRSLRLSCAAS) are framework-1. The region spanning 20–117 (QVQLVESGGG…EDTAVYYCAR (98 aa)) is the Ig-like domain. Residues C41 and C115 are joined by a disulfide bond. The interval 45-52 (GFTFSSYA) is complementarity-determining-1. The framework-2 stretch occupies residues 53 to 69 (MHWVRQAPGKGLEWVAV). Residues 70-77 (ISYDGSNK) form a complementarity-determining-2 region. Residues 78 to 115 (YYADSVKGRFTISRDNSKNTLYLQMNSLRAEDTAVYYC) form a framework-3 region. The complementarity-determining-3 stretch occupies residues 116 to 117 (AR).

In terms of assembly, immunoglobulins are composed of two identical heavy chains and two identical light chains; disulfide-linked.

Its subcellular location is the secreted. It is found in the cell membrane. Functionally, v region of the variable domain of immunoglobulin heavy chains that participates in the antigen recognition. Immunoglobulins, also known as antibodies, are membrane-bound or secreted glycoproteins produced by B lymphocytes. In the recognition phase of humoral immunity, the membrane-bound immunoglobulins serve as receptors which, upon binding of a specific antigen, trigger the clonal expansion and differentiation of B lymphocytes into immunoglobulins-secreting plasma cells. Secreted immunoglobulins mediate the effector phase of humoral immunity, which results in the elimination of bound antigens. The antigen binding site is formed by the variable domain of one heavy chain, together with that of its associated light chain. Thus, each immunoglobulin has two antigen binding sites with remarkable affinity for a particular antigen. The variable domains are assembled by a process called V-(D)-J rearrangement and can then be subjected to somatic hypermutations which, after exposure to antigen and selection, allow affinity maturation for a particular antigen. The protein is Immunoglobulin heavy variable 3-30-3 of Homo sapiens (Human).